The following is a 221-amino-acid chain: MPKLLPAQEAARIYHTNYVRNARAMGVLWALFTLCFSILMVVTFIQPYWIGDSIDTPQAGYFGLFSYCIGNALTGELICKGSPLDFGTIPSSAFKTAMFFVGISTFLIIGSILCFSLFFFCNAATVYKVCAWMQLAAATGLMIGCLIYPDGWDSSEVKRMCGDKTDKYTLGACTVRWAYILCIIGILDALILSFLAFVLGNRQDNLLPSDFKVESKEEGNE.

At 1-24 (MPKLLPAQEAARIYHTNYVRNARA) the chain is on the cytoplasmic side. Residues 25–45 (MGVLWALFTLCFSILMVVTFI) traverse the membrane as a helical segment. Over 46-98 (QPYWIGDSIDTPQAGYFGLFSYCIGNALTGELICKGSPLDFGTIPSSAFKTAM) the chain is Extracellular. The chain crosses the membrane as a helical span at residues 99 to 119 (FFVGISTFLIIGSILCFSLFF). Over 120-128 (FCNAATVYK) the chain is Cytoplasmic. Residues 129 to 149 (VCAWMQLAAATGLMIGCLIYP) traverse the membrane as a helical segment. Topologically, residues 150-179 (DGWDSSEVKRMCGDKTDKYTLGACTVRWAY) are extracellular. The helical transmembrane segment at 180–200 (ILCIIGILDALILSFLAFVLG) threads the bilayer. At 201 to 221 (NRQDNLLPSDFKVESKEEGNE) the chain is on the cytoplasmic side.

Belongs to the LHFP family.

The protein resides in the cell membrane. Its function is as follows. Probable component of the mechanotransducer (MET) non-specific cation channel complex. The polypeptide is LHFPL tetraspan subfamily member 5 protein (Gallus gallus (Chicken)).